The sequence spans 347 residues: NADH-ubiquinone oxidoreductase chain 2 (347 aa).

11 consecutive transmembrane segments (helical) span residues 3–23 (PMILLMLLITILSGTSIVMMS), 25–45 (HWFLTWLGFEMNMMAMIPVLM), 59–79 (YFLTQATASMILVLGIIINLI), 96–116 (TLLTIALVMKLGLAPFHFWVP), 122–142 (VSLNSGLILLTWQKIAPLSLL), 149–169 (VNTNILLVMSLLSIMVGGWGG), 178–198 (IMAYSSIAHMGWMIMIMIYNP), 201–221 (SLLNLLIYILMTSSMFMLLMF), 239–259 (IITTTILIILLSLGGLPPLSG), 274–294 (DSVILPAVMAILALLNLFFYM), and 326–346 (MTSLISISIMALPLTPLAMIL).

It belongs to the complex I subunit 2 family. In terms of assembly, core subunit of respiratory chain NADH dehydrogenase (Complex I) which is composed of 45 different subunits. Interacts with TMEM242.

It is found in the mitochondrion inner membrane. It carries out the reaction a ubiquinone + NADH + 5 H(+)(in) = a ubiquinol + NAD(+) + 4 H(+)(out). In terms of biological role, core subunit of the mitochondrial membrane respiratory chain NADH dehydrogenase (Complex I) which catalyzes electron transfer from NADH through the respiratory chain, using ubiquinone as an electron acceptor. Essential for the catalytic activity and assembly of complex I. The chain is NADH-ubiquinone oxidoreductase chain 2 from Sylvisorex johnstoni (Johnston's forest shrew).